Consider the following 381-residue polypeptide: S-adenosylmethionine synthase (381 aa).

Histidine 15 provides a ligand contact to ATP. Aspartate 17 is a Mg(2+) binding site. Residue glutamate 43 participates in K(+) binding. Residues glutamate 56 and glutamine 99 each coordinate L-methionine. Residues 99-109 are flexible loop; sequence QSLDIAQGVDN. ATP is bound by residues 164 to 166, 230 to 231, aspartate 239, 245 to 246, and lysine 266; these read DGK, RF, and RK. Aspartate 239 contacts L-methionine. Lysine 270 contacts L-methionine.

Belongs to the AdoMet synthase family. In terms of assembly, homotetramer; dimer of dimers. It depends on Mg(2+) as a cofactor. K(+) serves as cofactor.

The protein localises to the cytoplasm. The enzyme catalyses L-methionine + ATP + H2O = S-adenosyl-L-methionine + phosphate + diphosphate. The protein operates within amino-acid biosynthesis; S-adenosyl-L-methionine biosynthesis; S-adenosyl-L-methionine from L-methionine: step 1/1. Its function is as follows. Catalyzes the formation of S-adenosylmethionine (AdoMet) from methionine and ATP. The overall synthetic reaction is composed of two sequential steps, AdoMet formation and the subsequent tripolyphosphate hydrolysis which occurs prior to release of AdoMet from the enzyme. This Legionella jeonii protein is S-adenosylmethionine synthase.